Consider the following 352-residue polypeptide: UDP-3-O-acylglucosamine N-acyltransferase (352 aa).

The Proton acceptor role is filled by histidine 246.

This sequence belongs to the transferase hexapeptide repeat family. LpxD subfamily. In terms of assembly, homotrimer.

The catalysed reaction is a UDP-3-O-[(3R)-3-hydroxyacyl]-alpha-D-glucosamine + a (3R)-hydroxyacyl-[ACP] = a UDP-2-N,3-O-bis[(3R)-3-hydroxyacyl]-alpha-D-glucosamine + holo-[ACP] + H(+). The protein operates within bacterial outer membrane biogenesis; LPS lipid A biosynthesis. In terms of biological role, catalyzes the N-acylation of UDP-3-O-acylglucosamine using 3-hydroxyacyl-ACP as the acyl donor. Is involved in the biosynthesis of lipid A, a phosphorylated glycolipid that anchors the lipopolysaccharide to the outer membrane of the cell. This chain is UDP-3-O-acylglucosamine N-acyltransferase, found in Chlorobium luteolum (strain DSM 273 / BCRC 81028 / 2530) (Pelodictyon luteolum).